Consider the following 126-residue polypeptide: Cystatin-C (126 aa).

The signal sequence occupies residues 1–18 (MKMLVFPVLAALFAVGLG). Residues 22–115 (GAPRDINISE…CTFSVWSRPW (94 aa)) form the Cystatin domain. The short motif at 64-68 (QVVSG) is the Secondary area of contact element. Intrachain disulfides connect cysteine 82–cysteine 92 and cysteine 106–cysteine 126.

The protein belongs to the cystatin family. As to expression, ubiquitously expressed in normal tissues including brain, eye, gill, heart, gullet, liver, spleen, stomach, pyloric ceca, intestine, kidney and muscle. Expressed, but not up-regulated, in lipopolysaccharide (LPS)-stimulated tissues including kidney, spleen, muscle and gill.

It is found in the secreted. Its function is as follows. Thiol protease inhibitor. Has high papain inhibitory activity and inhibits to a lesser extent fish cathepsins L, S, K, F, X and bovine cathepsin B in vitro. The polypeptide is Cystatin-C (Paralichthys olivaceus (Bastard halibut)).